The sequence spans 317 residues: Homoserine kinase (317 aa).

95 to 105 lines the ATP pocket; that stretch reads PHSRGLGSSAA.

Belongs to the GHMP kinase family. Homoserine kinase subfamily.

The protein resides in the cytoplasm. The enzyme catalyses L-homoserine + ATP = O-phospho-L-homoserine + ADP + H(+). Its pathway is amino-acid biosynthesis; L-threonine biosynthesis; L-threonine from L-aspartate: step 4/5. Functionally, catalyzes the ATP-dependent phosphorylation of L-homoserine to L-homoserine phosphate. The sequence is that of Homoserine kinase from Mycolicibacterium smegmatis (strain ATCC 700084 / mc(2)155) (Mycobacterium smegmatis).